The primary structure comprises 179 residues: Large ribosomal subunit protein uL5 (179 aa).

Belongs to the universal ribosomal protein uL5 family. Part of the 50S ribosomal subunit; part of the 5S rRNA/L5/L18/L25 subcomplex. Contacts the 5S rRNA and the P site tRNA. Forms a bridge to the 30S subunit in the 70S ribosome.

Functionally, this is one of the proteins that bind and probably mediate the attachment of the 5S RNA into the large ribosomal subunit, where it forms part of the central protuberance. In the 70S ribosome it contacts protein S13 of the 30S subunit (bridge B1b), connecting the 2 subunits; this bridge is implicated in subunit movement. Contacts the P site tRNA; the 5S rRNA and some of its associated proteins might help stabilize positioning of ribosome-bound tRNAs. This is Large ribosomal subunit protein uL5 from Rickettsia peacockii (strain Rustic).